The primary structure comprises 149 residues: MTRKQKRLAVIAGGMGFIATAVLLVLFAFSQSVAYFYMPGDLAKSPIGAGTLIRLGGLVGEGSIVRGEGTQVQFSVTDGSDAIKVRYNGILPDLFREGQGVVTEGKFEPGSDVFVADSVLAKHDERYMPKQVADRLKADGVWKGEEASQ.

Residues 1 to 7 (MTRKQKR) are Cytoplasmic-facing. Residues 8-28 (LAVIAGGMGFIATAVLLVLFA) traverse the membrane as a helical; Signal-anchor for type II membrane protein segment. At 29–149 (FSQSVAYFYM…GVWKGEEASQ (121 aa)) the chain is on the periplasmic side. Heme-binding residues include His123 and Tyr127.

This sequence belongs to the CcmE/CycJ family.

It is found in the cell inner membrane. Heme chaperone required for the biogenesis of c-type cytochromes. Transiently binds heme delivered by CcmC and transfers the heme to apo-cytochromes in a process facilitated by CcmF and CcmH. The polypeptide is Cytochrome c-type biogenesis protein CcmE (Rhizobium rhizogenes (strain K84 / ATCC BAA-868) (Agrobacterium radiobacter)).